The following is a 235-amino-acid chain: MSVHIEAKQGEIAESILLPGDPLRAKYIAETFLEDVTCYNNVRGMLGFTGTYKGKRVSVQGTGMGVPSISIYVNELIQSYGVKNLIRVGTCGAIQKDVKVRDVIIAMTACTDSNMNRLTFPGFDFAPAANFDLLKKAYDAGTEKGLHVRVGNVLTADVFYRESMDIVKKLGDYGVLAVEMETTALYTLAAKYGVNALSVLTVSDHIFTGEETTSEERQTTFNEMIEIALDAAIQQ.

A purine D-ribonucleoside is bound at residue His-4. Residues Gly-20, Arg-24, Arg-43, and Arg-87–Thr-90 each bind phosphate. A purine D-ribonucleoside contacts are provided by residues Glu-162, Glu-179–Glu-181, and Ser-203–Asp-204. The active-site Proton donor is Asp-204.

The protein belongs to the PNP/UDP phosphorylase family. As to quaternary structure, homohexamer; trimer of homodimers.

The catalysed reaction is a purine D-ribonucleoside + phosphate = a purine nucleobase + alpha-D-ribose 1-phosphate. It carries out the reaction a purine 2'-deoxy-D-ribonucleoside + phosphate = a purine nucleobase + 2-deoxy-alpha-D-ribose 1-phosphate. Functionally, catalyzes the reversible phosphorolytic breakdown of the N-glycosidic bond in the beta-(deoxy)ribonucleoside molecules, with the formation of the corresponding free purine bases and pentose-1-phosphate. This chain is Purine nucleoside phosphorylase DeoD-type, found in Bacillus cereus (strain ATCC 14579 / DSM 31 / CCUG 7414 / JCM 2152 / NBRC 15305 / NCIMB 9373 / NCTC 2599 / NRRL B-3711).